Reading from the N-terminus, the 525-residue chain is Ribosomal protein S6 kinase beta-1 (525 aa).

The segment at 1–54 (MRRRRRRDGFYPAPDFRDREAEDMAGVFDIDLDQPEDAGSEDELEEGGQLNESM) is disordered. Positions 28 to 32 (FDIDL) match the TOS motif motif. Residues 30-46 (IDLDQPEDAGSEDELEE) show a composition bias toward acidic residues. A Protein kinase domain is found at 91 to 352 (FELLRVLGKG…AGEVQAHPFF (262 aa)). ATP contacts are provided by residues 97–105 (LGKGGYGKV) and Lys123. Asp218 functions as the Proton acceptor in the catalytic mechanism. Thr252 is subject to Phosphothreonine; by PDPK1. The AGC-kinase C-terminal domain occupies 353–423 (RHINWEELLA…VAPSVLESVK (71 aa)). A disordered region spans residues 380 to 399 (SQFDSKFTRQTPVDSPDDST). The span at 381 to 399 (QFDSKFTRQTPVDSPDDST) shows a compositional bias: polar residues. Ser394 is subject to Phosphoserine. Thr412 carries the post-translational modification Phosphothreonine; by MTOR, NEK6 and NEK7. The tract at residues 424-525 (EKFSFEPKIR…KRPEHLRMNL (102 aa)) is autoinhibitory domain. A phosphoserine mark is found at Ser434 and Ser441. Thr444 is subject to Phosphothreonine. Phosphoserine is present on residues Ser447 and Ser452. Residues 486–509 (VTTSGEASAPLPIRQPNSGPYKKQ) form a disordered region. The residue at position 516 (Lys516) is an N6-acetyllysine.

Belongs to the protein kinase superfamily. AGC Ser/Thr protein kinase family. S6 kinase subfamily. In terms of assembly, interacts with PPP1R9A/neurabin-1. Interacts with RPTOR. Interacts with IRS1. Interacts with EIF3B and EIF3C. Interacts with TRAF4. Interacts with POLDIP3. Interacts (via N-terminus) with IER5. Post-translationally, phosphorylation at Thr-412 is regulated by mTORC1. The phosphorylation at this site is maintained by an agonist-dependent autophosphorylation mechanism. Activated by phosphorylation at Thr-252 by PDPK1. Dephosphorylation by PPP1CC at Thr-412 in mitochondrion.

The protein resides in the cytoplasm. It is found in the synapse. The protein localises to the synaptosome. Its subcellular location is the mitochondrion outer membrane. It localises to the mitochondrion. It carries out the reaction L-seryl-[protein] + ATP = O-phospho-L-seryl-[protein] + ADP + H(+). The catalysed reaction is L-threonyl-[protein] + ATP = O-phospho-L-threonyl-[protein] + ADP + H(+). With respect to regulation, activation requires multiple phosphorylation events on serine/threonine residues. Activation appears to be first mediated by phosphorylation of multiple sites in the autoinhibitory domain, which facilitates phosphorylation at Thr-412, disrupting the autoinhibitory mechanism and allowing phosphorylation of Thr-252 by PDPK1. The active conformation of the kinase is believed to be stabilized by a mechanism involving three conserved phosphorylation sites located in the kinase domain activation loop (Thr-252) and in the AGC-kinase C-terminal domain (Ser-394 in the middle of the tail/linker region and Thr-412 within a hydrophobic motif at its end). Activated by mTORC1; isoform Alpha I and isoform Alpha II are sensitive to rapamycin, which inhibits activating phosphorylation at Thr-412. Activated by PDPK1. Functionally, serine/threonine-protein kinase that acts downstream of mTOR signaling in response to growth factors and nutrients to promote cell proliferation, cell growth and cell cycle progression. Regulates protein synthesis through phosphorylation of EIF4B, RPS6 and EEF2K, and contributes to cell survival by repressing the pro-apoptotic function of BAD. Under conditions of nutrient depletion, the inactive form associates with the EIF3 translation initiation complex. Upon mitogenic stimulation, phosphorylation by the mechanistic target of rapamycin complex 1 (mTORC1) leads to dissociation from the EIF3 complex and activation. The active form then phosphorylates and activates several substrates in the pre-initiation complex, including the EIF2B complex and the cap-binding complex component EIF4B. Also controls translation initiation by phosphorylating a negative regulator of EIF4A, PDCD4, targeting it for ubiquitination and subsequent proteolysis. Promotes initiation of the pioneer round of protein synthesis by phosphorylating POLDIP3/SKAR. In response to IGF1, activates translation elongation by phosphorylating EEF2 kinase (EEF2K), which leads to its inhibition and thus activation of EEF2. Also plays a role in feedback regulation of mTORC2 by mTORC1 by phosphorylating MAPKAP1/SIN1, MTOR and RICTOR, resulting in the inhibition of mTORC2 and AKT1 signaling. Also involved in feedback regulation of mTORC1 and mTORC2 by phosphorylating DEPTOR. Mediates cell survival by phosphorylating the pro-apoptotic protein BAD and suppressing its pro-apoptotic function. Phosphorylates mitochondrial URI1 leading to dissociation of a URI1-PPP1CC complex. The free mitochondrial PPP1CC can then dephosphorylate RPS6KB1 at Thr-412, which is proposed to be a negative feedback mechanism for the RPS6KB1 anti-apoptotic function. Mediates TNF-alpha-induced insulin resistance by phosphorylating IRS1 at multiple serine residues, resulting in accelerated degradation of IRS1. In cells lacking functional TSC1-2 complex, constitutively phosphorylates and inhibits GSK3B. May be involved in cytoskeletal rearrangement through binding to neurabin. Phosphorylates and activates the pyrimidine biosynthesis enzyme CAD, downstream of MTOR. Following activation by mTORC1, phosphorylates EPRS and thereby plays a key role in fatty acid uptake by adipocytes and also most probably in interferon-gamma-induced translation inhibition. This Oryctolagus cuniculus (Rabbit) protein is Ribosomal protein S6 kinase beta-1 (RPS6KB1).